A 111-amino-acid polypeptide reads, in one-letter code: MTIAPTTLLLFAATALAELVGCYLPYLWLRKGGSVWLLLPTALSLAVFVWLLSLHPEASGRVYAAYGGVYIASALLWLWWVDGVTPTRWDLLGAACCLLGMAVIMFSPRSA.

The next 4 helical transmembrane spans lie at 8–28, 32–52, 64–84, and 91–111; these read LLLF…PYLW, GGSV…VWLL, AAYG…VDGV, and LLGA…PRSA.

Belongs to the UPF0060 family.

It is found in the cell inner membrane. The protein is UPF0060 membrane protein XAC3064 of Xanthomonas axonopodis pv. citri (strain 306).